Reading from the N-terminus, the 461-residue chain is ADP-specific phosphofructokinase (461 aa).

One can recognise an ADPK domain in the interval 1-457 (MVRELLEKAR…FASYLAMLKE (457 aa)). Mg(2+)-binding residues include E268, E298, and D441. The active-site Proton acceptor is D441.

This sequence belongs to the carbohydrate kinase PfkC family. Mg(2+) serves as cofactor.

The protein localises to the cytoplasm. It catalyses the reaction beta-D-fructose 6-phosphate + ADP = beta-D-fructose 1,6-bisphosphate + AMP + H(+). Its pathway is carbohydrate degradation; glycolysis. Its function is as follows. Catalyzes the phosphorylation of fructose 6-phosphate to fructose 1,6-bisphosphate using ADP as the phosphate donor. The protein is ADP-specific phosphofructokinase of Thermococcus zilligii.